The primary structure comprises 353 residues: Photosystem II D2 protein (353 aa).

Thr2 bears the N-acetylthreonine mark. Position 2 is a phosphothreonine (Thr2). A helical transmembrane segment spans residues 41–61 (CAYFALGGWFTGTTFVTSWYT). His118 lines the chlorophyll a pocket. A helical transmembrane segment spans residues 125–141 (GFMLRQFELARSVQLRP). Residues Gln130 and Asn143 each contribute to the pheophytin a site. The helical transmembrane segment at 153–166 (VFVSVFLIYPLGQS) threads the bilayer. Residue His198 participates in chlorophyll a binding. Residues 208–228 (AALLCAIHGATVENTLFEDGD) traverse the membrane as a helical segment. 2 residues coordinate a plastoquinone: His215 and Phe262. His215 contributes to the Fe cation binding site. Residue His269 coordinates Fe cation. The chain crosses the membrane as a helical span at residues 279-295 (GLWMSALGVVGLALNLR).

Belongs to the reaction center PufL/M/PsbA/D family. PSII is composed of 1 copy each of membrane proteins PsbA, PsbB, PsbC, PsbD, PsbE, PsbF, PsbH, PsbI, PsbJ, PsbK, PsbL, PsbM, PsbT, PsbX, PsbY, PsbZ, Psb30/Ycf12, at least 3 peripheral proteins of the oxygen-evolving complex and a large number of cofactors. It forms dimeric complexes. The cofactor is The D1/D2 heterodimer binds P680, chlorophylls that are the primary electron donor of PSII, and subsequent electron acceptors. It shares a non-heme iron and each subunit binds pheophytin, quinone, additional chlorophylls, carotenoids and lipids. There is also a Cl(-1) ion associated with D1 and D2, which is required for oxygen evolution. The PSII complex binds additional chlorophylls, carotenoids and specific lipids..

The protein resides in the plastid. The protein localises to the chloroplast thylakoid membrane. It catalyses the reaction 2 a plastoquinone + 4 hnu + 2 H2O = 2 a plastoquinol + O2. In terms of biological role, photosystem II (PSII) is a light-driven water:plastoquinone oxidoreductase that uses light energy to abstract electrons from H(2)O, generating O(2) and a proton gradient subsequently used for ATP formation. It consists of a core antenna complex that captures photons, and an electron transfer chain that converts photonic excitation into a charge separation. The D1/D2 (PsbA/PsbD) reaction center heterodimer binds P680, the primary electron donor of PSII as well as several subsequent electron acceptors. D2 is needed for assembly of a stable PSII complex. The chain is Photosystem II D2 protein from Chloranthus spicatus (Chulantree).